The sequence spans 135 residues: S-adenosylmethionine decarboxylase proenzyme (135 aa).

Ser-64 (schiff-base intermediate with substrate; via pyruvic acid) is an active-site residue. Ser-64 carries the pyruvic acid (Ser); by autocatalysis modification. His-69 (proton acceptor; for processing activity) is an active-site residue. Catalysis depends on Cys-84, which acts as the Proton donor; for catalytic activity.

Belongs to the prokaryotic AdoMetDC family. Type 1 subfamily. In terms of assembly, heterotetramer of two alpha and two beta chains arranged as a dimer of alpha/beta heterodimers. Requires pyruvate as cofactor. Post-translationally, is synthesized initially as an inactive proenzyme. Formation of the active enzyme involves a self-maturation process in which the active site pyruvoyl group is generated from an internal serine residue via an autocatalytic post-translational modification. Two non-identical subunits are generated from the proenzyme in this reaction, and the pyruvate is formed at the N-terminus of the alpha chain, which is derived from the carboxyl end of the proenzyme. The post-translation cleavage follows an unusual pathway, termed non-hydrolytic serinolysis, in which the side chain hydroxyl group of the serine supplies its oxygen atom to form the C-terminus of the beta chain, while the remainder of the serine residue undergoes an oxidative deamination to produce ammonia and the pyruvoyl group blocking the N-terminus of the alpha chain.

It catalyses the reaction S-adenosyl-L-methionine + H(+) = S-adenosyl 3-(methylsulfanyl)propylamine + CO2. It functions in the pathway amine and polyamine biosynthesis; S-adenosylmethioninamine biosynthesis; S-adenosylmethioninamine from S-adenosyl-L-methionine: step 1/1. Its function is as follows. Catalyzes the decarboxylation of S-adenosylmethionine to S-adenosylmethioninamine (dcAdoMet), the propylamine donor required for the synthesis of the polyamines spermine and spermidine from the diamine putrescine. The sequence is that of S-adenosylmethionine decarboxylase proenzyme from Aquifex aeolicus (strain VF5).